The primary structure comprises 105 residues: Large ribosomal subunit protein bL21 (105 aa).

The protein belongs to the bacterial ribosomal protein bL21 family. As to quaternary structure, part of the 50S ribosomal subunit. Contacts protein L20.

Its function is as follows. This protein binds to 23S rRNA in the presence of protein L20. The protein is Large ribosomal subunit protein bL21 of Parafrankia sp. (strain EAN1pec).